A 291-amino-acid chain; its full sequence is Endo-1,4-beta-xylanase 11B (291 aa).

A signal peptide spans 1–19 (MVAFSSLFLGASIAATALA). One can recognise a GH11 domain in the interval 34–222 (TYTQSATGTH…SSGSARINVG (189 aa)). A glycan (N-linked (GlcNAc...) asparagine) is linked at N93. E118 acts as the Nucleophile in catalysis. E209 functions as the Proton donor in the catalytic mechanism. A disordered region spans residues 223–246 (GGSTGGGNNGGGNNGGNPGGNPGG). Positions 255–291 (NCSPRWGQCGGQGWNGPTCCESGTTCRQQNQWYSQCL) constitute a CBM1 domain.

The protein belongs to the glycosyl hydrolase 11 (cellulase G) family.

It is found in the secreted. The catalysed reaction is Endohydrolysis of (1-&gt;4)-beta-D-xylosidic linkages in xylans.. It functions in the pathway glycan degradation; xylan degradation. With respect to regulation, the activity iss completely inhibited by Hg(2+), a metal ion that interacts with Trp and oxidizes the indole ring, and is significantly enhanced by beta-mercaptoethanol, which counteracts the oxidation effects of the S-S linkage between Cys residues. In terms of biological role, endo-1,4-beta-xylanase involved in the hydrolysis of xylan, a major structural heterogeneous polysaccharide found in plant biomass representing the second most abundant polysaccharide in the biosphere, after cellulose. Shows maximum activity on soluble wheat arabinoxylan (defined as 100%), moderate activity on birchwood xylan (80.5%) and beechwood xylan (76.2%), and weak activity on insoluble wheat arabinoxylan (7.0%). Has no activity towards glucan or carboxymethyl cellulose-sodium (CMC-Na). This chain is Endo-1,4-beta-xylanase 11B, found in Humicola insolens (Soft-rot fungus).